The following is a 240-amino-acid chain: Small ribosomal subunit protein uS3 (240 aa).

The region spanning 39-107 is the KH type-2 domain; it reads IREFIKEECK…ELHLNIVEVR (69 aa). Positions 212 to 222 are enriched in basic and acidic residues; sequence PQARDRRHAEL. A disordered region spans residues 212 to 240; the sequence is PQARDRRHAELQEGGGPRPQGGGRPRRDR. Over residues 224–234 the composition is skewed to gly residues; sequence EGGGPRPQGGG.

This sequence belongs to the universal ribosomal protein uS3 family. In terms of assembly, part of the 30S ribosomal subunit. Forms a tight complex with proteins S10 and S14.

Functionally, binds the lower part of the 30S subunit head. Binds mRNA in the 70S ribosome, positioning it for translation. The polypeptide is Small ribosomal subunit protein uS3 (Dinoroseobacter shibae (strain DSM 16493 / NCIMB 14021 / DFL 12)).